Consider the following 203-residue polypeptide: Glycerol-3-phosphate acyltransferase (203 aa).

5 helical membrane-spanning segments follow: residues 10 to 30, 59 to 79, 87 to 107, 116 to 136, and 160 to 180; these read MLIL…GLIL, GAAA…VLLA, AAQV…WLGF, FLGL…LSWL, and LVLL…LMVF.

The protein belongs to the PlsY family. In terms of assembly, probably interacts with PlsX.

It is found in the cell inner membrane. It carries out the reaction an acyl phosphate + sn-glycerol 3-phosphate = a 1-acyl-sn-glycero-3-phosphate + phosphate. It functions in the pathway lipid metabolism; phospholipid metabolism. In terms of biological role, catalyzes the transfer of an acyl group from acyl-phosphate (acyl-PO(4)) to glycerol-3-phosphate (G3P) to form lysophosphatidic acid (LPA). This enzyme utilizes acyl-phosphate as fatty acyl donor, but not acyl-CoA or acyl-ACP. The protein is Glycerol-3-phosphate acyltransferase of Ruegeria pomeroyi (strain ATCC 700808 / DSM 15171 / DSS-3) (Silicibacter pomeroyi).